The following is an 85-amino-acid chain: Protein RALF-like 28 (85 aa).

Positions 1-31 (MSILKETKRFMVVAMFIACVFISNNMNVAVA) are cleaved as a signal peptide. 2 disulfides stabilise this stretch: cysteine 48–cysteine 53 and cysteine 66–cysteine 72. The interval 60–85 (NPYHRGCEKSKRCRGPDPPALPRKMI) is disordered. A compositionally biased stretch (pro residues) spans 75–85 (PDPPALPRKMI).

This sequence belongs to the plant rapid alkalinization factor (RALF) family.

It localises to the secreted. Functionally, cell signaling peptide that may regulate plant stress, growth, and development. Mediates a rapid alkalinization of extracellular space by mediating a transient increase in the cytoplasmic Ca(2+) concentration leading to a calcium-dependent signaling events through a cell surface receptor and a concomitant activation of some intracellular mitogen-activated protein kinases. This chain is Protein RALF-like 28 (RALFL28), found in Arabidopsis thaliana (Mouse-ear cress).